The following is a 189-amino-acid chain: Blue copper protein (189 aa).

Positions 1–24 are cleaved as a signal peptide; that stretch reads MAFSNALVLCFLLAIINMALPSLA. One can recognise a Phytocyanin domain in the interval 25 to 124; sequence TVYTVGDTSG…GMKLSIKVKA (100 aa). Cu cation contacts are provided by histidine 65, cysteine 106, and histidine 111. A disulfide bond links cysteine 78 and cysteine 106. Positions 127 to 160 are enriched in low complexity; the sequence is GSSAAPSATPSSSGKGSPSSDDTPAATTTTTTPT. Positions 127 to 165 are disordered; the sequence is GSSAAPSATPSSSGKGSPSSDDTPAATTTTTTPTKQNES. An N-linked (GlcNAc...) asparagine glycan is attached at asparagine 163.

This Pisum sativum (Garden pea) protein is Blue copper protein.